We begin with the raw amino-acid sequence, 249 residues long: Probable transcriptional regulatory protein A1S_1496 (249 aa).

This sequence belongs to the TACO1 family.

The protein localises to the cytoplasm. This is Probable transcriptional regulatory protein A1S_1496 from Acinetobacter baumannii (strain ATCC 17978 / DSM 105126 / CIP 53.77 / LMG 1025 / NCDC KC755 / 5377).